The following is a 255-amino-acid chain: MEIIPAIDLLDSVCVRLHQGDYEKVTRFSEDPVDQALSWQKQGATRLHLVDLDGAKSGEPVNDSCVRAITSALNIPVQLGGGVRTLERAEELLAYGLEQVILGTVAIEQPQLVKQLAQRNPGRIIVGIDAKNGKVATRGWISQSEVNATDLASDFNAAGIAAIISTDIATDGTLEGPNLESLRAMANASSVPVIASGGVGCMADLLSLLALEPYGVSGVIVGRALYDGKVDLKEAIRAIGDGRLQDPPTSKPLMA.

The Proton acceptor role is filled by Asp-8. The active-site Proton donor is Asp-129.

This sequence belongs to the HisA/HisF family.

The protein localises to the cytoplasm. It catalyses the reaction 1-(5-phospho-beta-D-ribosyl)-5-[(5-phospho-beta-D-ribosylamino)methylideneamino]imidazole-4-carboxamide = 5-[(5-phospho-1-deoxy-D-ribulos-1-ylimino)methylamino]-1-(5-phospho-beta-D-ribosyl)imidazole-4-carboxamide. It participates in amino-acid biosynthesis; L-histidine biosynthesis; L-histidine from 5-phospho-alpha-D-ribose 1-diphosphate: step 4/9. This chain is 1-(5-phosphoribosyl)-5-[(5-phosphoribosylamino)methylideneamino] imidazole-4-carboxamide isomerase, found in Prochlorococcus marinus (strain MIT 9313).